The following is a 255-amino-acid chain: 5'-nucleotidase SurE (255 aa).

Positions 8, 9, 39, and 91 each coordinate a divalent metal cation.

The protein belongs to the SurE nucleotidase family. Requires a divalent metal cation as cofactor.

It localises to the cytoplasm. It carries out the reaction a ribonucleoside 5'-phosphate + H2O = a ribonucleoside + phosphate. Nucleotidase that shows phosphatase activity on nucleoside 5'-monophosphates. The polypeptide is 5'-nucleotidase SurE (Acinetobacter baumannii (strain ATCC 17978 / DSM 105126 / CIP 53.77 / LMG 1025 / NCDC KC755 / 5377)).